Reading from the N-terminus, the 469-residue chain is 3-isopropylmalate dehydratase large subunit (469 aa).

3 residues coordinate [4Fe-4S] cluster: Cys-347, Cys-408, and Cys-411.

Belongs to the aconitase/IPM isomerase family. LeuC type 1 subfamily. In terms of assembly, heterodimer of LeuC and LeuD. [4Fe-4S] cluster is required as a cofactor.

The enzyme catalyses (2R,3S)-3-isopropylmalate = (2S)-2-isopropylmalate. Its pathway is amino-acid biosynthesis; L-leucine biosynthesis; L-leucine from 3-methyl-2-oxobutanoate: step 2/4. Functionally, catalyzes the isomerization between 2-isopropylmalate and 3-isopropylmalate, via the formation of 2-isopropylmaleate. In Actinobacillus pleuropneumoniae serotype 5b (strain L20), this protein is 3-isopropylmalate dehydratase large subunit.